A 1270-amino-acid polypeptide reads, in one-letter code: MPEPGKKPVSAFNKKPRSAEVTAGSAAVFEAETERSGVMVRWQRDGSDITANDKYGLAAEGKRHTLTVRDASPDDQGSYAVIAGSSKVKFDLKVTEPAPPEKAESEVAPGAPEEVPAPATELEESVSSPEGSVSVTQDGSAAEHQGAPDDPIGLFLMRPQDGEVTVGGSIVFSARVAGASLLKPPVVKWFKGKWVDLSSKVGQHLQLHDSYDRASKVYLFELHITDAQTTSAGGYRCEVSTKDKFDSCNFNLTVHEAIGSGDLDLRSAFRRTSLAGAGRRTSDSHEDAGTPDFSSLLKKRDSFRRDSKLEAPAEEDVWEILRQAPPSEYERIAFQHGVEACHRPLKRLKGMKQDEKKSTAFQKKLEPAYQVNKGHKIRLTVELADPDAEVKWLKNGQEIQMSGSKYIFESVGAKRTLTISQCSLADDAAYQCVVGGEKCSTELFVKEPPVLITRSLEDQLVMVGQRVEFECEVSEEGAQVKWLKDGVELTREETFKYRFKKDGRKHHLIINEATLEDAGHYAVRTSGGQSLAELIVQEKKLEVYQSIADLAVGAKDQAVFKCEVSDENVRGVWLKNGKELVPDNRIKVSHIGRVHKLTIDDVTPADEADYSFVPEGFACNLSAKLHFMEVKIDFVPRQEPPKIHLDCPGSTPDTIVVVTGNKLRLDVPISGDPAPTVVWQKTVTQGKKASAGPHPDAPEDAGADEEWVFDKKLLCETEGRVRVETTKDRSVFTVEGAEKEDEGVYTVTVKNPVGEDQVNLTVKVIDVPDAPAAPKISNVGEDSCTVQWEPPAYDGGQPVLGYILERKKKKSYRWMRLNFDLLRELSHEARRMIEGVAYEMRVYAVNAVGMSRPSPASQPFMPIGPPGEPTHLAVEDVSDTTVSLKWRPPERVGAGGLDGYSVEYCQEGCSEWTPALQGLTERRSMLVKDLPTGARLLFRVRAHNVAGPGGPIVTKEPVTVQEILQRPRLQLPRHLRQTIQKKVGEPVNLLIPFQGKPRPQVTWTKEGQPLAGEEVSIRNSPTDTILFIRAARRTHSGTYQVTVRIENMEDKATLILQIVDKPSPPQDIRIVETWGFNVALEWKPPQDDGNTEIWGYTVQKADKKTMEWFTVLEHYRRTHCVVSELIIGNGYYFRVFSHNMVGSSDKAAATKEPVFIPRPGITYEPPKYKALDFSEAPSFTQPLANRSIIAGYNAILCCAVRGSPKPKISWFKNGLDLGEDARFRMFCKQGVLTLEIRKPCPYDGGVYVCRATNLQGEAQCECRLEVRVPQ.

An N-acetylmethionine modification is found at Met1. Residues 1-24 (MPEPGKKPVSAFNKKPRSAEVTAG) form a disordered region. Residues Ser47 and Ser72 each carry the phosphoserine modification. The segment covering 94–105 (VTEPAPPEKAES) has biased composition (basic and acidic residues). Residues 94-152 (VTEPAPPEKAESEVAPGAPEEVPAPATELEESVSSPEGSVSVTQDGSAAEHQGAPDDPI) form a disordered region. Over residues 106–135 (EVAPGAPEEVPAPATELEESVSSPEGSVSV) the composition is skewed to low complexity. In terms of domain architecture, Ig-like C2-type 1 spans 151-254 (PIGLFLMRPQ…FDSCNFNLTV (104 aa)). 4 residues coordinate Zn(2+): Gln206, His208, Glu221, and His223. Ser273, Ser282, and Ser302 each carry phosphoserine; by PKA and PKC. Phosphoserine occurs at positions 307 and 423. 4 Ig-like C2-type domains span residues 358–448 (STAF…VKEP), 449–539 (PVLI…VQEK), 540–629 (KLEV…HFME), and 641–767 (PKIH…VIDV). Cysteines 432 and 439 form a disulfide. Phosphoserine occurs at positions 455 and 546. Thr603 bears the Phosphothreonine mark. A disordered region spans residues 683-702 (VTQGKKASAGPHPDAPEDAG). 2 consecutive Fibronectin type-III domains span residues 770 to 866 (APAA…IGPP) and 868 to 963 (EPTH…VQEI). One can recognise an Ig-like C2-type 6 domain in the interval 967–1061 (PRLQLPRHLR…ATLILQIVDK (95 aa)). A Fibronectin type-III 3 domain is found at 1064 to 1159 (PPQDIRIVET…TKEPVFIPRP (96 aa)). Residues 1177–1270 (PSFTQPLANR…ECRLEVRVPQ (94 aa)) form the Ig-like C2-type 7 domain. The residue at position 1237 (Arg1237) is an Omega-N-methylarginine.

It belongs to the immunoglobulin superfamily. MyBP family. Substrate for phosphorylation by PKA and PKC. Reversible phosphorylation appears to modulate contraction. In terms of processing, polyubiquitinated.

Thick filament-associated protein located in the crossbridge region of vertebrate striated muscle a bands. In vitro it binds MHC, F-actin and native thin filaments, and modifies the activity of actin-activated myosin ATPase. It may modulate muscle contraction or may play a more structural role. This Mus musculus (Mouse) protein is Myosin-binding protein C, cardiac-type (Mybpc3).